Reading from the N-terminus, the 564-residue chain is Dihydroxy-acid dehydratase (564 aa).

Asp80 lines the Mg(2+) pocket. A [2Fe-2S] cluster-binding site is contributed by Cys121. Mg(2+) is bound by residues Asp122 and Lys123. Residue Lys123 is modified to N6-carboxylysine. [2Fe-2S] cluster is bound at residue Cys194. Glu447 lines the Mg(2+) pocket. Ser473 functions as the Proton acceptor in the catalytic mechanism.

The protein belongs to the IlvD/Edd family. As to quaternary structure, homodimer. It depends on [2Fe-2S] cluster as a cofactor. Mg(2+) is required as a cofactor.

The catalysed reaction is (2R)-2,3-dihydroxy-3-methylbutanoate = 3-methyl-2-oxobutanoate + H2O. It catalyses the reaction (2R,3R)-2,3-dihydroxy-3-methylpentanoate = (S)-3-methyl-2-oxopentanoate + H2O. The protein operates within amino-acid biosynthesis; L-isoleucine biosynthesis; L-isoleucine from 2-oxobutanoate: step 3/4. It functions in the pathway amino-acid biosynthesis; L-valine biosynthesis; L-valine from pyruvate: step 3/4. In terms of biological role, functions in the biosynthesis of branched-chain amino acids. Catalyzes the dehydration of (2R,3R)-2,3-dihydroxy-3-methylpentanoate (2,3-dihydroxy-3-methylvalerate) into 2-oxo-3-methylpentanoate (2-oxo-3-methylvalerate) and of (2R)-2,3-dihydroxy-3-methylbutanoate (2,3-dihydroxyisovalerate) into 2-oxo-3-methylbutanoate (2-oxoisovalerate), the penultimate precursor to L-isoleucine and L-valine, respectively. This is Dihydroxy-acid dehydratase from Listeria welshimeri serovar 6b (strain ATCC 35897 / DSM 20650 / CCUG 15529 / CIP 8149 / NCTC 11857 / SLCC 5334 / V8).